The following is a 174-amino-acid chain: MINPELRDGRADGFIHRIVPKLIQNWKIGLMCFLSIIITTVCIIMIATWSKHAKPVACSGDWLGVRDKCFYFSDDTRNWTASKIFCSLQKAELAQIDTQEDMEFLKRYAGTDMHWIGLSRKQGDSWKWTNGTTFNGWFEIIGNGSFAFLSADGVHSSRGFIDIKWICSKPKYFL.

At 1 to 27 (MINPELRDGRADGFIHRIVPKLIQNWK) the chain is on the cytoplasmic side. A helical; Signal-anchor for type II membrane protein membrane pass occupies residues 28 to 48 (IGLMCFLSIIITTVCIIMIAT). Residues 49-174 (WSKHAKPVAC…WICSKPKYFL (126 aa)) are Extracellular-facing. The cysteines at positions 58 and 69 are disulfide-linked. In terms of domain architecture, C-type lectin spans 65-174 (VRDKCFYFSD…WICSKPKYFL (110 aa)). N-linked (GlcNAc...) asparagine glycans are attached at residues Asn-78, Asn-130, and Asn-143. A disulfide bond links Cys-86 and Cys-167.

As to quaternary structure, homodimer; non-disulfide-linked. Interacts with KLRB1. Interacts with KLRF2. In terms of processing, N-glycosylated. In terms of tissue distribution, mainly expressed in skin. Also expressed in keratinocytes, spleen, thymus, small intestine, peripheral blood monocytes, bone marrow, ovary, testis and skin. High expression in CD8(+), B-lymphocytes and naive CD4(+) T-cells. Restricted mostly to proliferating lymphocytes. Not detected in myeloid leukocytes or natural killer (NK) cells.

The protein resides in the cell membrane. Its function is as follows. Membrane-bound protein expressed mainly on keratinocytes which acts as a ligand to stimulate the activating receptor NKp65/KLRF2, expressed on the surface of natural killer (NK) cells. Facilitates thereby dedicated immune recognition of keratinocytes leading to natural killer cell mediated cytotoxicity. Also plays a role in modulating the extent of T-cell expansion. The polypeptide is C-type lectin domain family 2 member A (CLEC2A) (Homo sapiens (Human)).